The chain runs to 388 residues: Protein-glutamate methylesterase/protein-glutamine glutaminase 4 (388 aa).

Residues 4–121 (KVLVVDDSGF…SGDASKIKRL (118 aa)) enclose the Response regulatory domain. Position 55 is a 4-aspartylphosphate (D55). Residues 137–196 (SGASAPASVPQPAKPAAPIPVREPPKPAAPVTRPAEPRAKAPPAKPEPKPEVKAAKSRRT) are disordered. Over residues 148–164 (PAKPAAPIPVREPPKPA) the composition is skewed to pro residues. Positions 197–388 (PRQDYKVVLI…FAPRLIDGVG (192 aa)) constitute a CheB-type methylesterase domain. Residues S209, H236, and D332 contribute to the active site.

The protein belongs to the CheB family. Post-translationally, phosphorylated by CheA. Phosphorylation of the N-terminal regulatory domain activates the methylesterase activity.

The protein localises to the cytoplasm. The enzyme catalyses [protein]-L-glutamate 5-O-methyl ester + H2O = L-glutamyl-[protein] + methanol + H(+). It carries out the reaction L-glutaminyl-[protein] + H2O = L-glutamyl-[protein] + NH4(+). Functionally, involved in chemotaxis. Part of a chemotaxis signal transduction system that modulates chemotaxis in response to various stimuli. Catalyzes the demethylation of specific methylglutamate residues introduced into the chemoreceptors (methyl-accepting chemotaxis proteins or MCP) by CheR. Also mediates the irreversible deamidation of specific glutamine residues to glutamic acid. The protein is Protein-glutamate methylesterase/protein-glutamine glutaminase 4 of Hahella chejuensis (strain KCTC 2396).